Here is a 215-residue protein sequence, read N- to C-terminus: Porin MspC (215 aa).

A signal peptide spans 1–31; that stretch reads MKAISRVLIAMISALAAAVAGLFVSAGTSHA.

Belongs to the mycobacterial porin (TC 1.B.24) family. As to quaternary structure, octamers. Probably forms a goblet with the wide end on the exterior of the outer membrane and a central channel. It is not known if mixed oligomers of MspC with other Msp subunits form in vivo.

It localises to the cell outer membrane. It is found in the secreted. The protein localises to the cell wall. Its function is as follows. A constitutively expressed secondary porin, forms a water-filled channel which favors the permeation of cations and less efficiently phosphate. There are about 2400 porins in wild-type, 800 in an mspA deletion and 150 in a double mspA-mspC deletion. This chain is Porin MspC (mspC), found in Mycolicibacterium smegmatis (strain ATCC 700084 / mc(2)155) (Mycobacterium smegmatis).